Consider the following 88-residue polypeptide: uncharacterized protein (88 aa).

A signal peptide spans 1-23 (MAVSGLRLTIVWGLLVLILTCQA). Residues 25 to 40 (DKPEGKPDEQPHDSGK) are compositionally biased toward basic and acidic residues. The disordered stretch occupies residues 25-45 (DKPEGKPDEQPHDSGKNSEPA).

It is found in the secreted. This is an uncharacterized protein from Bos taurus (Bovine).